Here is a 666-residue protein sequence, read N- to C-terminus: MFLKLFLLLSLVSFSHSDSSSTVSCPNGTDFHQLTTVFRYVSGFNSSWFSSNCSAVITHVVLPSRKLNGTVSWNPIRNLTRLRVLDLSNNSLDGSLPTWLWSMPGLVSVNLSRNRFGGSIRVIPVNGSVLSAVKELNLSFNRFKHAVNFTGFTNLTTLDLSHNSLGVLPLGLGSLSGLRHLDISRCKINGSVKPISGLKSLDYLDLSENSMNGSFPVDFPNLNHLQFLNLSANRFSGSVGFDKYRKFGKSAFLHGGDFVFNDSKIPYHHRIHRLPHRHPPPVRQRNVKTHRTNHTPLVIGLSSSLGALIIVIFAAAIILIRRRMKSARTKSRWAISNPTPLDFKMEKSGPFEFGTESGSSWVADIKEPTAAPVVMASKPLMNLTFKDLIVATSHFGTESVISDGTCGPLYRAVLPGDLHVAIKVLERIRDVDQNDAVTAFEALTRLKHPNLLTLSGYCIAGKEKLILYEFMANGDLHRWLHELPAGETNVEDWSADTWESHVGDSSPEKTNWLIRHRIAIGVARGLAYLHHVGTTHGHLVATNILLTETLEPRISDFGINNIARTGDDTNKNNVEFDVYSFGVILFELLTGKQGSDENVKSVRRLVKERRGEEALDSRLRLAAGESVNEMVESLRIGYFCTAETPVKRPTMQQVLGLLKDIRTVSR.

Residues 1–17 (MFLKLFLLLSLVSFSHS) form the signal peptide. Over 18–297 (DSSSTVSCPN…KTHRTNHTPL (280 aa)) the chain is Extracellular. N-linked (GlcNAc...) asparagine glycans are attached at residues Asn27, Asn45, Asn52, Asn68, Asn78, Asn89, Asn110, Asn126, Asn137, Asn148, Asn154, Asn189, Asn212, Asn229, and Asn261. LRR repeat units lie at residues 79–103 (LTRL…LWSM), 105–127 (GLVS…PVNG), 130–152 (LSAV…FTGF), 153–177 (TNLT…SLSG), 178–197 (LRHL…PISG), 198–224 (LKSL…NLNH), and 226–246 (QFLN…KYRK). A helical transmembrane segment spans residues 298–318 (VIGLSSSLGALIIVIFAAAII). The tract at residues 319–337 (LIRRRMKSARTKSRWAISN) is calmodulin binding. Over 319–666 (LIRRRMKSAR…LLKDIRTVSR (348 aa)) the chain is Cytoplasmic. Residues 395 to 661 (FGTESVISDG…QQVLGLLKDI (267 aa)) form the Protein kinase domain. ATP contacts are provided by residues 401–409 (ISDGTCGPL) and Lys423.

Belongs to the protein kinase superfamily. Ser/Thr protein kinase family. As to quaternary structure, binds calmodulin (CaM) in a calcium-dependent manner. Interacts with CAM1, but not with CAM8. The cofactor is Mn(2+). Mg(2+) serves as cofactor. In terms of processing, calmodulin (CaM)-independent autophosphorylation. As to expression, expressed in reproductive and vegetative tissues, with higher levels in seedlings and flowers, but not in leaves.

The protein localises to the cell membrane. It catalyses the reaction L-seryl-[protein] + ATP = O-phospho-L-seryl-[protein] + ADP + H(+). The enzyme catalyses L-threonyl-[protein] + ATP = O-phospho-L-threonyl-[protein] + ADP + H(+). With respect to regulation, not stimulated by calmodulin (CaM). Its function is as follows. Can phosphorylate the myelin basic protein in vitro. Required for endosperm development in embryos. Maybe involved in auxin and osmotic stress responses. This chain is Calmodulin-binding receptor kinase CaMRLK, found in Arabidopsis thaliana (Mouse-ear cress).